A 233-amino-acid polypeptide reads, in one-letter code: Probable chemoreceptor glutamine deamidase CheD (233 aa).

This sequence belongs to the CheD family.

The enzyme catalyses L-glutaminyl-[protein] + H2O = L-glutamyl-[protein] + NH4(+). Its function is as follows. Probably deamidates glutamine residues to glutamate on methyl-accepting chemotaxis receptors (MCPs), playing an important role in chemotaxis. This is Probable chemoreceptor glutamine deamidase CheD from Vibrio cholerae serotype O1 (strain ATCC 39315 / El Tor Inaba N16961).